We begin with the raw amino-acid sequence, 550 residues long: Protein UshA (550 aa).

The first 25 residues, 1 to 25 (MKLLQRGVALALLTTFTLASETALA), serve as a signal peptide directing secretion. Positions 41, 43, 84, 116, 217, 252, and 254 each coordinate Zn(2+). An intrachain disulfide couples Cys-258 to Cys-275. Substrate contacts are provided by residues 375–379 (RDKVR) and 498–504 (FNATGGD).

This sequence belongs to the 5'-nucleotidase family. Monomer. Zn(2+) serves as cofactor.

It is found in the periplasm. It catalyses the reaction UDP-sugar + H2O = UMP + alpha-D-aldose 1-phosphate.. It carries out the reaction a ribonucleoside 5'-phosphate + H2O = a ribonucleoside + phosphate. The activity of this protein is inhibited by an intracellular protein inhibitor. In terms of biological role, degradation of external UDP-glucose to uridine monophosphate and glucose-1-phosphate, which can then be used by the cell. In Escherichia coli (strain K12), this protein is Protein UshA (ushA).